Here is a 226-residue protein sequence, read N- to C-terminus: Ribonuclease 3 (226 aa).

One can recognise an RNase III domain in the interval 7–129 (LPRLCRTLGY…IIGAIYLDSD (123 aa)). Residue glutamate 42 coordinates Mg(2+). Residue aspartate 46 is part of the active site. Residues aspartate 115 and glutamate 118 each contribute to the Mg(2+) site. Glutamate 118 is an active-site residue. The DRBM domain maps to 156–226 (DAKTLLQEYL…AAQVLELLKK (71 aa)).

This sequence belongs to the ribonuclease III family. In terms of assembly, homodimer. Mg(2+) is required as a cofactor.

The protein resides in the cytoplasm. It carries out the reaction Endonucleolytic cleavage to 5'-phosphomonoester.. Its function is as follows. Digests double-stranded RNA. Involved in the processing of primary rRNA transcript to yield the immediate precursors to the large and small rRNAs (23S and 16S). Processes some mRNAs, and tRNAs when they are encoded in the rRNA operon. Processes pre-crRNA and tracrRNA of type II CRISPR loci if present in the organism. The protein is Ribonuclease 3 of Shewanella sp. (strain ANA-3).